A 164-amino-acid polypeptide reads, in one-letter code: UPF0262 protein Nham_0287 (164 aa).

This sequence belongs to the UPF0262 family.

This is UPF0262 protein Nham_0287 from Nitrobacter hamburgensis (strain DSM 10229 / NCIMB 13809 / X14).